Here is a 303-residue protein sequence, read N- to C-terminus: 3-methyl-2-oxobutanoate hydroxymethyltransferase (303 aa).

A compositionally biased stretch (polar residues) spans 1–10 (MDSSGTVRNQ). The interval 1-41 (MDSSGTVRNQTSDDHSRPADAAGTAATLYGAPAETRSPRRS) is disordered. Residues Asp84 and Asp123 each contribute to the Mg(2+) site. 3-methyl-2-oxobutanoate-binding positions include 84 to 85 (DS), Asp123, and Lys153. Glu155 provides a ligand contact to Mg(2+). Glu221 (proton acceptor) is an active-site residue.

The protein belongs to the PanB family. As to quaternary structure, homodecamer; pentamer of dimers. It depends on Mg(2+) as a cofactor.

The protein resides in the cytoplasm. It carries out the reaction 3-methyl-2-oxobutanoate + (6R)-5,10-methylene-5,6,7,8-tetrahydrofolate + H2O = 2-dehydropantoate + (6S)-5,6,7,8-tetrahydrofolate. The protein operates within cofactor biosynthesis; (R)-pantothenate biosynthesis; (R)-pantoate from 3-methyl-2-oxobutanoate: step 1/2. Functionally, catalyzes the reversible reaction in which hydroxymethyl group from 5,10-methylenetetrahydrofolate is transferred onto alpha-ketoisovalerate to form ketopantoate. This chain is 3-methyl-2-oxobutanoate hydroxymethyltransferase, found in Frankia alni (strain DSM 45986 / CECT 9034 / ACN14a).